The chain runs to 176 residues: Cytochrome b (176 aa).

The next 3 helical transmembrane spans lie at 33–53 (FGSL…FLAM), 77–98 (WVLR…YLHV), and 113–133 (WNMG…GYVL). Positions 83 and 97 each coordinate heme b.

Belongs to the cytochrome b family. As to quaternary structure, the cytochrome bc1 complex contains 11 subunits: 3 respiratory subunits (MT-CYB, CYC1 and UQCRFS1), 2 core proteins (UQCRC1 and UQCRC2) and 6 low-molecular weight proteins (UQCRH/QCR6, UQCRB/QCR7, UQCRQ/QCR8, UQCR10/QCR9, UQCR11/QCR10 and a cleavage product of UQCRFS1). This cytochrome bc1 complex then forms a dimer. Heme b is required as a cofactor.

It localises to the mitochondrion inner membrane. Its function is as follows. Component of the ubiquinol-cytochrome c reductase complex (complex III or cytochrome b-c1 complex) that is part of the mitochondrial respiratory chain. The b-c1 complex mediates electron transfer from ubiquinol to cytochrome c. Contributes to the generation of a proton gradient across the mitochondrial membrane that is then used for ATP synthesis. The sequence is that of Cytochrome b (MT-CYB) from Lasionycteris noctivagans (Silver-haired bat).